We begin with the raw amino-acid sequence, 280 residues long: Probable 6-phosphogluconolactonase 2 (280 aa).

The protein belongs to the glucosamine/galactosamine-6-phosphate isomerase family. 6-phosphogluconolactonase subfamily.

It carries out the reaction 6-phospho-D-glucono-1,5-lactone + H2O = 6-phospho-D-gluconate + H(+). It functions in the pathway carbohydrate degradation; pentose phosphate pathway; D-ribulose 5-phosphate from D-glucose 6-phosphate (oxidative stage): step 2/3. Hydrolysis of 6-phosphogluconolactone to 6-phosphogluconate. The protein is Probable 6-phosphogluconolactonase 2 of Oryza sativa subsp. indica (Rice).